Reading from the N-terminus, the 89-residue chain is Probable Fe(2+)-trafficking protein (89 aa).

The protein belongs to the Fe(2+)-trafficking protein family.

Could be a mediator in iron transactions between iron acquisition and iron-requiring processes, such as synthesis and/or repair of Fe-S clusters in biosynthetic enzymes. This chain is Probable Fe(2+)-trafficking protein, found in Legionella pneumophila (strain Lens).